A 456-amino-acid polypeptide reads, in one-letter code: Cysteine--tRNA ligase (456 aa).

C29 serves as a coordination point for Zn(2+). A 'HIGH' region motif is present at residues 31 to 41; sequence VTVYDYCHVGH. Zn(2+) is bound by residues C210, H235, and E239. The 'KMSKS' region motif lies at 267 to 271; it reads KMSKS. K270 is an ATP binding site.

The protein belongs to the class-I aminoacyl-tRNA synthetase family. As to quaternary structure, monomer. Zn(2+) serves as cofactor.

It is found in the cytoplasm. It catalyses the reaction tRNA(Cys) + L-cysteine + ATP = L-cysteinyl-tRNA(Cys) + AMP + diphosphate. In Hydrogenovibrio crunogenus (strain DSM 25203 / XCL-2) (Thiomicrospira crunogena), this protein is Cysteine--tRNA ligase.